We begin with the raw amino-acid sequence, 116 residues long: Aspartate 1-decarboxylase (116 aa).

The Schiff-base intermediate with substrate; via pyruvic acid role is filled by Ser25. Residue Ser25 is modified to Pyruvic acid (Ser). Thr57 is a substrate binding site. Catalysis depends on Tyr58, which acts as the Proton donor. 73–75 (GAA) lines the substrate pocket.

This sequence belongs to the PanD family. In terms of assembly, heterooctamer of four alpha and four beta subunits. It depends on pyruvate as a cofactor. In terms of processing, is synthesized initially as an inactive proenzyme, which is activated by self-cleavage at a specific serine bond to produce a beta-subunit with a hydroxyl group at its C-terminus and an alpha-subunit with a pyruvoyl group at its N-terminus.

It is found in the cytoplasm. The catalysed reaction is L-aspartate + H(+) = beta-alanine + CO2. Its pathway is cofactor biosynthesis; (R)-pantothenate biosynthesis; beta-alanine from L-aspartate: step 1/1. Its function is as follows. Catalyzes the pyruvoyl-dependent decarboxylation of aspartate to produce beta-alanine. The sequence is that of Aspartate 1-decarboxylase from Syntrophus aciditrophicus (strain SB).